Reading from the N-terminus, the 339-residue chain is DNA repair protein RAD51 homolog 1 (339 aa).

The interval 1-23 is disordered; sequence MAMQVQFEASTDTSAEEESFGPE. In terms of domain architecture, HhH spans 48–77; sequence TVESVAHAPKKELLNIKGISEAKADKILAE. 127–134 lines the ATP pocket; the sequence is GEFRTGKT.

Belongs to the RecA family. RAD51 subfamily. In terms of assembly, forms linear homooligomers, giving rise to a RAD51 nucleoprotein filament, which is essential for strand-pairing reactions during DNA recombination. As to expression, expressed at high levels in lymphoid and reproductive organs.

It is found in the nucleus. The protein resides in the cytoplasm. The protein localises to the chromosome. In terms of biological role, plays an important role in homologous strand exchange, a key step in DNA repair through homologous recombination (HR). Binds to single-stranded DNA in an ATP-dependent manner to form nucleoprotein filaments which are essential for the homology search and strand exchange. Catalyzes the recognition of homology and strand exchange between homologous DNA partners to form a joint molecule between a processed DNA break and the repair template. Recruited to resolve stalled replication forks during replication stress. Also involved in interstrand cross-link repair. The protein is DNA repair protein RAD51 homolog 1 (RAD51A) of Gallus gallus (Chicken).